Consider the following 689-residue polypeptide: Methionine--tRNA ligase (689 aa).

The 'HIGH' region signature appears at 13-23; it reads PYANGNFHIGH. The Zn(2+) site is built by cysteine 144, cysteine 147, cysteine 157, and cysteine 160. A 'KMSKS' region motif is present at residues 341–345; that stretch reads KMSKS. Lysine 344 contacts ATP. Residues 583 to 689 form the tRNA-binding domain; that stretch reads DFAKVDLRIA…PGASPGLRVR (107 aa).

It belongs to the class-I aminoacyl-tRNA synthetase family. MetG type 1 subfamily. In terms of assembly, homodimer. Requires Zn(2+) as cofactor.

The protein resides in the cytoplasm. The enzyme catalyses tRNA(Met) + L-methionine + ATP = L-methionyl-tRNA(Met) + AMP + diphosphate. In terms of biological role, is required not only for elongation of protein synthesis but also for the initiation of all mRNA translation through initiator tRNA(fMet) aminoacylation. This is Methionine--tRNA ligase from Polaromonas sp. (strain JS666 / ATCC BAA-500).